A 450-amino-acid polypeptide reads, in one-letter code: CBL-interacting protein kinase 23 (450 aa).

The region spanning 13–268 (YELGRTLGEG…IAELINNEWF (256 aa)) is the Protein kinase domain. ATP contacts are provided by residues 19–27 (LGEGTFAKV) and lysine 42. Residue aspartate 136 is the Proton acceptor of the active site. Residues 154-183 (DFGLSALSQQVREDGLLHTTCGTPNYVAPE) are activation loop. Residues 306–331 (EERPSVMNAFELISTSQGLNLGTLFE) enclose the NAF domain. The tract at residues 339–368 (KRETRFASRLPANEILSKIEAAAGPMGFNV) is PPI.

Belongs to the protein kinase superfamily. CAMK Ser/Thr protein kinase family. SNF1 subfamily. Mn(2+) serves as cofactor.

It catalyses the reaction L-seryl-[protein] + ATP = O-phospho-L-seryl-[protein] + ADP + H(+). The catalysed reaction is L-threonyl-[protein] + ATP = O-phospho-L-threonyl-[protein] + ADP + H(+). Its function is as follows. CIPK serine-threonine protein kinases interact with CBL proteins. Binding of a CBL protein to the regulatory NAF domain of CIPK protein lead to the activation of the kinase in a calcium-dependent manner. This chain is CBL-interacting protein kinase 23 (CIPK23), found in Oryza sativa subsp. japonica (Rice).